Consider the following 361-residue polypeptide: Beta-hexosaminidase (361 aa).

Residues aspartate 69, arginine 77, arginine 144, and 174 to 175 (KH) each bind substrate. The active-site Proton donor/acceptor is the histidine 187. Aspartate 258 functions as the Nucleophile in the catalytic mechanism.

The protein belongs to the glycosyl hydrolase 3 family. NagZ subfamily.

The protein resides in the cytoplasm. The enzyme catalyses Hydrolysis of terminal non-reducing N-acetyl-D-hexosamine residues in N-acetyl-beta-D-hexosaminides.. The protein operates within cell wall biogenesis; peptidoglycan recycling. Plays a role in peptidoglycan recycling by cleaving the terminal beta-1,4-linked N-acetylglucosamine (GlcNAc) from peptide-linked peptidoglycan fragments, giving rise to free GlcNAc, anhydro-N-acetylmuramic acid and anhydro-N-acetylmuramic acid-linked peptides. The polypeptide is Beta-hexosaminidase (Neisseria meningitidis serogroup B (strain ATCC BAA-335 / MC58)).